Here is a 673-residue protein sequence, read N- to C-terminus: DNA ligase (673 aa).

Residues 32-36 (DHVYD), 81-82 (SL), and E111 contribute to the NAD(+) site. K113 functions as the N6-AMP-lysine intermediate in the catalytic mechanism. NAD(+)-binding residues include R134, E171, K286, and K310. Zn(2+)-binding residues include C404, C407, C422, and C428. The BRCT domain maps to 595–673 (NIIDEYKNKT…NEFWKKDNNF (79 aa)).

The protein belongs to the NAD-dependent DNA ligase family. LigA subfamily. It depends on Mg(2+) as a cofactor. Requires Mn(2+) as cofactor.

It carries out the reaction NAD(+) + (deoxyribonucleotide)n-3'-hydroxyl + 5'-phospho-(deoxyribonucleotide)m = (deoxyribonucleotide)n+m + AMP + beta-nicotinamide D-nucleotide.. Functionally, DNA ligase that catalyzes the formation of phosphodiester linkages between 5'-phosphoryl and 3'-hydroxyl groups in double-stranded DNA using NAD as a coenzyme and as the energy source for the reaction. It is essential for DNA replication and repair of damaged DNA. This chain is DNA ligase, found in Ureaplasma parvum serovar 3 (strain ATCC 27815 / 27 / NCTC 11736).